The following is a 599-amino-acid chain: Matrix metallopeptidase-21 (599 aa).

The first 20 residues, 1 to 20 (MLTVIRRIFIIQTFIFITAE), serve as a signal peptide directing secretion. Residues 21-170 (KIFHSRDHSD…NHEHQAPVRK (150 aa)) constitute a propeptide that is removed on maturation. Cys-130 serves as a coordination point for Zn(2+). Residues 141-170 (DVTGSNSTRNHIRTSTNTSHNHEHQAPVRK) form a disordered region. Residues 143 to 159 (TGSNSTRNHIRTSTNTS) show a composition bias toward polar residues. His-309 is a Zn(2+) binding site. Residue Glu-310 is part of the active site. Residues His-313 and His-319 each contribute to the Zn(2+) site. Cys-355 and Cys-586 are disulfide-bonded. 4 Hemopexin repeats span residues 356–415 (TGRF…WHGL), 417–473 (SGGV…FPGV), 474–522 (SGPL…FPAI), and 529–585 (VRSL…WFDI). An N-linked (GlcNAc...) asparagine glycan is attached at Asn-398.

The protein belongs to the peptidase M10A family. Post-translationally, the precursor is cleaved by a furin endopeptidase.

Plays a specialized role in the generation of left-right asymmetry during embryogenesis. May act as a negative regulator of the NOTCH-signaling pathway. The polypeptide is Matrix metallopeptidase-21 (Danio rerio (Zebrafish)).